Consider the following 290-residue polypeptide: Short chain dehydrogenase/reductase nsrO (290 aa).

NADP(+)-binding residues include Ile-37 and Lys-149. Catalysis depends on proton donor residues Ser-168 and Tyr-182. Tyr-182, Lys-186, and Thr-221 together coordinate NADP(+). Lys-186 functions as the Lowers pKa of active site Tyr in the catalytic mechanism.

The protein belongs to the short-chain dehydrogenases/reductases (SDR) family.

Its pathway is secondary metabolite biosynthesis. Short chain dehydrogenase/reductase; part of the gene cluster that mediates the biosynthesis of the tetrahydroxanthone dimer neosartorin, which exhibits antibacterial activity. The two different monomeric units appear to be synthesized by the same set of enzymes, among which the Baeyer-Villiger monooxygenase nsrF is the key enzyme for the divergence of the biosynthetic routes. The pathway begins with the synthesis of atrochrysone thioester by the polyketide synthase nsrB. The atrochrysone carboxyl ACP thioesterase nsrC then breaks the thioester bond and releases the atrochrysone carboxylic acid from AacuL. Atrochrysone carboxylic acid is decarboxylated by the decarboxylase nsrE, and oxidized by the anthrone oxygenase nsrD to yield emodin. Emodin is then reduced to emodin hydroquinone by the oxidoreductase nsrR. A-ring reduction by the short chain dehydrogenase nsrJ, dehydration by the scytalone dehydratase-like protein nsrI and probable spontaneous re-oxidation, results in overall deoxygenation to chrysophanol. The Baeyer-Villiger monooxygenase nsrF accepts chrysophanol as a substrate to insert one oxygen atom at two different positions to yield the precursors of both monomric units. NsrF is promiscuous/flexible in interacting with the 2 (non methylated and methylated) aromatic rings of chrysophanol, thus diverging the biosynthetic pathway at this point. After the hydrolysis of the lactones, methylesterification by the methyltransferase nsrG yields respectively moniliphenone and 2,2',6'-trihydroxy-4-methyl-6-methoxya-cyldiphenylmethanone. The next steps are the hydroxylation by the FAD-dependent monooxygenase nsrK, followed by isomerization by the monooxygenase nsrQ. The short chain dehydrogenase/reductase nsrO then catalyzes the C-5 ketoreduction to give the xanthone skeleton of blennolide C and 5-acetylblennolide A. The acetyltransferase nsrL has a strict substrate specificity and uses only blennolide A but not blennolide C to yield 5-acetylblennolide A as the single-acetylated product. In the final step of the biosynthesis, the heterodimerization of the 2 xanthones, blennolide C and 5-acetylblennolide A, is catalyzed by the cytochrome P450 monooxygenase nsrP. NsrP can utilize at least three different xanthones as its substrates to perform the dimerization reaction. This chain is Short chain dehydrogenase/reductase nsrO, found in Aspergillus novofumigatus (strain IBT 16806).